The primary structure comprises 144 residues: Peroxisomal membrane protein PEX34 (144 aa).

3 consecutive transmembrane segments (helical) span residues 18 to 30, 52 to 73, and 109 to 131; these read NIWS…LDFF, VWLC…KLCK, and TAAL…RLFK.

In terms of assembly, homooligomer. Interacts with PEX11, PEX25 and PEX27.

It is found in the peroxisome membrane. Its function is as follows. In concert with the three peroxisome divisional factors, PEX11, PEX25 and PEX27, controls peroxisome morphology and abundance under conditions of peroxisome proliferation. Maintains mature peroxisomes in actively dividing cells. The sequence is that of Peroxisomal membrane protein PEX34 (PEX34) from Saccharomyces cerevisiae (strain ATCC 204508 / S288c) (Baker's yeast).